The primary structure comprises 65 residues: Probable tautomerase RSp1151 (65 aa).

P2 acts as the Proton acceptor; via imino nitrogen in catalysis.

It belongs to the 4-oxalocrotonate tautomerase family.

This chain is Probable tautomerase RSp1151, found in Ralstonia nicotianae (strain ATCC BAA-1114 / GMI1000) (Ralstonia solanacearum).